The sequence spans 325 residues: NADH-cytochrome b5 reductase 2 (325 aa).

The chain crosses the membrane as a helical span at residues 32–48 (VPLYGGLALAAGGAYYY). In terms of domain architecture, FAD-binding FR-type spans 74-179 (QGWVDLKLAG…KGPIPKYPWE (106 aa)). An FAD-binding site is contributed by 182–217 (KHDHICMIAGGTGITPMYQIIRKIFNNPNDKTKVTL).

Belongs to the flavoprotein pyridine nucleotide cytochrome reductase family. FAD serves as cofactor.

The protein resides in the mitochondrion outer membrane. It catalyses the reaction 2 Fe(III)-[cytochrome b5] + NADH = 2 Fe(II)-[cytochrome b5] + NAD(+) + H(+). In terms of biological role, may mediate the reduction of outer membrane cytochrome b5. The protein is NADH-cytochrome b5 reductase 2 (MCR1) of Coccidioides immitis (strain RS) (Valley fever fungus).